Here is a 309-residue protein sequence, read N- to C-terminus: Protoheme IX farnesyltransferase (309 aa).

The next 9 helical transmembrane spans lie at 35 to 55, 64 to 84, 114 to 134, 135 to 155, 161 to 181, 187 to 207, 236 to 256, 257 to 277, and 289 to 309; these read IGIVNSNLITTFTGLWLALYF, LHIVFFTLFGSALVIAGSCSI, VLWLGIIFITVGTLSLLMTTV, TAAIVGLIGAITYIFLYTMWS, LNTVVGSISGAVPPVIGWTAV, VVPLVLFLIMFIWQTPHFLAL, IVVWVACLLPLPFYLFSLGVP, FLTVATLLNVGWLALGLYGFK, and FIYSLNYLTILFVAMVIATLW.

This sequence belongs to the UbiA prenyltransferase family. Protoheme IX farnesyltransferase subfamily. In terms of assembly, interacts with CtaA.

The protein resides in the cell membrane. It catalyses the reaction heme b + (2E,6E)-farnesyl diphosphate + H2O = Fe(II)-heme o + diphosphate. It functions in the pathway porphyrin-containing compound metabolism; heme O biosynthesis; heme O from protoheme: step 1/1. Functionally, converts heme B (protoheme IX) to heme O by substitution of the vinyl group on carbon 2 of heme B porphyrin ring with a hydroxyethyl farnesyl side group. This Geobacillus sp. (strain WCH70) protein is Protoheme IX farnesyltransferase.